Here is a 254-residue protein sequence, read N- to C-terminus: 5'-nucleotidase SurE (254 aa).

The a divalent metal cation site is built by Asp8, Asp9, Ser40, and Asn93.

Belongs to the SurE nucleotidase family. The cofactor is a divalent metal cation.

Its subcellular location is the cytoplasm. The catalysed reaction is a ribonucleoside 5'-phosphate + H2O = a ribonucleoside + phosphate. In terms of biological role, nucleotidase that shows phosphatase activity on nucleoside 5'-monophosphates. This is 5'-nucleotidase SurE from Methylobacterium radiotolerans (strain ATCC 27329 / DSM 1819 / JCM 2831 / NBRC 15690 / NCIMB 10815 / 0-1).